We begin with the raw amino-acid sequence, 869 residues long: MPMIDIDWLKDHVEVPEGLTYEQLAKDLVKVGLEEEEIHSSQVTGPIVVGYVVDATPEPQKNGKTINWCHVDCGDEWNETDEDGNKVPRGIICGAPNMKAGEKVVVTLPGAVLPGDFKIEPRKTYGHISNGMCASERELGLGDNHNGIILLRQYGFSEAEYEALKPGQDAMHLLHLDQPLLEINITPDRGYTLSYRGVAREYHHSTGAAYTDPAVALNEKAPEPADYQPGTPVDIDVEIDDNNPIHGVPGCDRYYARIVKDFNPNAHTPNWMRRRLIRAGMRSISLAVDVTNYVMLDLGQPMHAYDLDKLEGPIVVRRANEGEKLTTLDGKEHDLSVEDLLITDSPNGERGSRILGLAGVMGGLYGEVTADTKNILLEAAHFDQVTIARSARRHKIPSEASRRFERGVDTALQPAATQMAAELMAKYGNGEPSEHPNDVNNTPRAKAIHFKASEVARVAGLDVDINRISDILTDIGCTVAGGGNGEFAVTAPSWRPDLNEPCDLVEEIARLVGYDQIPITVPPAPVEGLVGLTPDQQRRRRVADELAEFGMVESLSYPFVGDDDYKAFGFDPEATKKVSVEIANPLYGDRPYLRREILPTLATTVQRNIRRGIENVSLYELGHVYLWDPNAPAIPALPGGVRPTDEQLAALDAGLPEQPDHVAGILTGLAEDDGWMGGKRPVDWSDAVEAVRRIAGRIGAAIELDQPAADDVPVQWHPGRAARVMVGDVFTGWVGELHPRVNEALGFPAHSAAFELNLTALFATLTGKPVQAKPISTFPPVKQDLAFTVDETVTAGQLENVIRKAAGANLESIELFDVFTGEQVGEGKKSLAYAVVFRSPSKTLSAEDSDAIRKAIVAEAAEIGAQLRA.

The region spanning 41-162 (SQVTGPIVVG…QYGFSEAEYE (122 aa)) is the tRNA-binding domain. The B5 domain occupies 443–519 (PRAKAIHFKA…RLVGYDQIPI (77 aa)). D497, D503, E506, and E507 together coordinate Mg(2+). The FDX-ACB domain maps to 776–868 (STFPPVKQDL…EAAEIGAQLR (93 aa)).

This sequence belongs to the phenylalanyl-tRNA synthetase beta subunit family. Type 1 subfamily. Tetramer of two alpha and two beta subunits. It depends on Mg(2+) as a cofactor.

The protein resides in the cytoplasm. It catalyses the reaction tRNA(Phe) + L-phenylalanine + ATP = L-phenylalanyl-tRNA(Phe) + AMP + diphosphate + H(+). The chain is Phenylalanine--tRNA ligase beta subunit from Bifidobacterium longum (strain NCC 2705).